The chain runs to 805 residues: Replication restart protein PriA (805 aa).

Residues 1–110 (MNFAEVIVDV…QAMLPAALKA (110 aa)) are 3'BD. The tract at residues 111–166 (KYEKELKIAHGADLPPQVERLFSETKTLLYSDIPDHETLKLIQRHVQKGDIDVTYK) is linker. The tract at residues 167-253 (VAQKTNKKMV…KESYEEVYRD (87 aa)) is WH. The 167-residue stretch at 282 to 448 (TLDSDEHKVF…QKGVYELLSL (167 aa)) folds into the Helicase ATP-binding domain. Residue 295 to 302 (GVTGSGKT) coordinates ATP. Residues 391–394 (DEEH) carry the DEAH box motif. Residues Cys510, Cys513, Cys519, Cys522, Cys537, Cys540, Cys550, and Cys553 each coordinate Zn(2+). A Helicase C-terminal domain is found at 545–699 (PVPHTCPECA…TFYQHEMAHR (155 aa)).

The protein belongs to the helicase family. PriA subfamily. Monomer. Component of the replication restart primosome which assembles in this order; PriA, DnaD then DnaB. The preferred DNA substrate mimics an arrested DNA replication fork with unreplicated lagging strand. Interacts with DnaD but not DnaB. Interacts with SSB (sbbA) via the latter's 35 residue C-terminal tail which tethers PriA to ssDNA. Colocalizes with DNA pol III subunit gamma/tau (dnaX). May interact with RarA. Requires Zn(2+) as cofactor.

The protein localises to the cytoplasm. Its subcellular location is the nucleoid. It catalyses the reaction Couples ATP hydrolysis with the unwinding of duplex DNA by translocating in the 3'-5' direction.. The enzyme catalyses ATP + H2O = ADP + phosphate + H(+). Functionally, initiates the restart of stalled replication forks, which reloads the replicative helicase on sites other than the origin of replication. Recognizes and binds to abandoned replication forks and remodels them to uncover a helicase loading site. Promotes assembly of the primosome at these replication forks. Serves as the initiating protein for assembly of the replication restart primosome; binding of PriA to an arrested DNA replication fork with unreplicated lagging strand triggers assembly. Sequentially DnaD (possibly as a dimer) and DnaB homotetramers bind. Assembly probably continues by loading of the DnaC replicative helicase aided by helicase loader DnaI. A single-strand (ss)DNA-dependent ATPase with helicase activity. Recognizes and binds the arrested nascent DNA chain at stalled replication forks. Binds forked DNA substrates and makes a larger complex with RarA; RarA has no effect on the helicase function. Binds ssDNA, D-loops and replication fork-like substrates but not double-stranded (ds)DNA; the preferred DNA substrate mimics an arrested DNA replication fork with an unreplicated lagging strand. Recognizes nicked dsDNA. A supershift on ssDNA occurs in the presence of single-stranded binding protein (SSB). Cannot substitute for E.coli PriA. Required for replication of plasmids that have a rolling circle mechanism, which produces circular single-stranded (ss)DNA intermediates corresponding to the lagging strand template, which are then converted into double-stranded (ds)DNA; priA is required to activate the conversion of ssDNA into dsDNA. The polypeptide is Replication restart protein PriA (Bacillus subtilis (strain 168)).